Consider the following 372-residue polypeptide: Y-box-binding protein 3 (372 aa).

The disordered stretch occupies residues 1-82 (MSEAGEATTT…LATAAGSEDA (82 aa)). Position 2 is an N-acetylserine (S2). S2 carries the post-translational modification Phosphoserine. Over residues 7 to 28 (ATTTTTTTLPQAPTEAAAAAPQ) the composition is skewed to low complexity. Position 34 is a phosphoserine (S34). Residues 35–79 (PVGSGAPQAAAPAPAAHVAGNPGGDAAPAATGTAAAASLATAAGS) show a composition bias toward low complexity. A CSD domain is found at 93-157 (GTVKWFNVRN…GEKGAEAANV (65 aa)). 4 positions are modified to phosphoserine: S134, S201, S203, and S204. A disordered region spans residues 181–372 (YYGRRRGPPR…APPTQQSSAE (192 aa)). Residues 222 to 238 (QLRRPQYRPQYRQRRFP) are compositionally biased toward basic residues. R251 bears the Omega-N-methylarginine mark. Over residues 314–324 (QQATSGPNQPS) the composition is skewed to polar residues. S324 is modified (phosphoserine). R326 is modified (omega-N-methylarginine). The span at 327–340 (RGYRRPYNYRRRPR) shows a compositional bias: basic residues. Phosphoserine is present on residues S346, S369, and S370.

Found in a mRNP complex with YBX2. Interacts with RRP1B. Highly expressed in skeletal muscle and heart.

It localises to the cytoplasm. The protein localises to the nucleus. Its function is as follows. Binds to the GM-CSF promoter. Seems to act as a repressor. Also binds to full-length mRNA and to short RNA sequences containing the consensus site 5'-UCCAUCA-3'. May have a role in translation repression. The polypeptide is Y-box-binding protein 3 (YBX3) (Homo sapiens (Human)).